The following is a 299-amino-acid chain: Probable plastid-lipid-associated protein 13, chloroplastic (299 aa).

The N-terminal 48 residues, Met-1–Arg-48, are a transit peptide targeting the chloroplast. Ala-2 carries the post-translational modification N-acetylvaline.

The protein belongs to the PAP/fibrillin family.

The protein localises to the plastid. It is found in the chloroplast. It localises to the plastoglobule. This Arabidopsis thaliana (Mouse-ear cress) protein is Probable plastid-lipid-associated protein 13, chloroplastic (PAP13).